A 259-amino-acid chain; its full sequence is 1-(5-phosphoribosyl)-5-[(5-phosphoribosylamino)methylideneamino] imidazole-4-carboxamide isomerase (259 aa).

Asp8 acts as the Proton acceptor in catalysis. Residue Asp129 is the Proton donor of the active site.

This sequence belongs to the HisA/HisF family.

It localises to the cytoplasm. It catalyses the reaction 1-(5-phospho-beta-D-ribosyl)-5-[(5-phospho-beta-D-ribosylamino)methylideneamino]imidazole-4-carboxamide = 5-[(5-phospho-1-deoxy-D-ribulos-1-ylimino)methylamino]-1-(5-phospho-beta-D-ribosyl)imidazole-4-carboxamide. The protein operates within amino-acid biosynthesis; L-histidine biosynthesis; L-histidine from 5-phospho-alpha-D-ribose 1-diphosphate: step 4/9. This is 1-(5-phosphoribosyl)-5-[(5-phosphoribosylamino)methylideneamino] imidazole-4-carboxamide isomerase from Pelotomaculum thermopropionicum (strain DSM 13744 / JCM 10971 / SI).